The following is a 389-amino-acid chain: Phospho-N-acetylmuramoyl-pentapeptide-transferase (389 aa).

A run of 10 helical transmembrane segments spans residues Arg-25–Ile-45, Met-74–Gly-94, Phe-97–Tyr-117, Phe-134–Glu-154, Ile-190–Ser-210, Gly-222–Met-242, Ala-259–Phe-279, Val-286–Ile-306, Ile-311–Val-331, and Gln-366–Leu-386.

The protein belongs to the glycosyltransferase 4 family. MraY subfamily. It depends on Mg(2+) as a cofactor.

It is found in the cell inner membrane. It carries out the reaction UDP-N-acetyl-alpha-D-muramoyl-L-alanyl-gamma-D-glutamyl-meso-2,6-diaminopimeloyl-D-alanyl-D-alanine + di-trans,octa-cis-undecaprenyl phosphate = di-trans,octa-cis-undecaprenyl diphospho-N-acetyl-alpha-D-muramoyl-L-alanyl-D-glutamyl-meso-2,6-diaminopimeloyl-D-alanyl-D-alanine + UMP. It functions in the pathway cell wall biogenesis; peptidoglycan biosynthesis. Its function is as follows. Catalyzes the initial step of the lipid cycle reactions in the biosynthesis of the cell wall peptidoglycan: transfers peptidoglycan precursor phospho-MurNAc-pentapeptide from UDP-MurNAc-pentapeptide onto the lipid carrier undecaprenyl phosphate, yielding undecaprenyl-pyrophosphoryl-MurNAc-pentapeptide, known as lipid I. The chain is Phospho-N-acetylmuramoyl-pentapeptide-transferase from Cupriavidus necator (strain ATCC 17699 / DSM 428 / KCTC 22496 / NCIMB 10442 / H16 / Stanier 337) (Ralstonia eutropha).